The sequence spans 612 residues: MPAYRSRTTTHGRNMAGARGLWRATGMKDSDFGKPIIAVVNSFTQFVPGHVHLKDLGQLVAREIEAAGGVAKEFNTIAVDDGIAMGHDGMLYSLPSREIIADSVEYMVNAHCADAMVCISNCDKITPGMLMAALRLNIPAVFVSGGPMEAGKVVLHGKTHALDLVDAMVAAADDKVSDEDVQIIERSACPTCGSCSGMFTANSMNCLTEALGLSLPGNGSTLATHADRKRLFVEAGHLIVDIARRYYEQEDERVLPRSIASKQAFENAMALDIAMGGSTNTVLHILAAAYEGEIDFTMDDIDRLSRKVPCLSKVAPAKADVHMEDVHRAGGIMSILGELDKGGLINRDCPTVHAETLGDAIDRWDITRTSSETVRNFFRAAPGGIPTQTAFSQAARWDELDTDRQNGVIRSVEHPFSKDGGLAVLKGNIALDGCIVKTAGVDESILKFSGPARVFESQDSAVKGILANEVKAGDVVVIRYEGPKGGPGMQEMLYPTSYLKSKGLGKACALITDGRFSGGTSGLSIGHVSPEAANGGTIGLVREGDMIDIDIPNRTIVLRVDEAELAARRKEQDAKGWKPVEQRKRRVTTALKAYAAFATSADRGAVRDLGDR.

Residue Asp-81 coordinates Mg(2+). [2Fe-2S] cluster is bound at residue Cys-122. Mg(2+) is bound by residues Asp-123 and Lys-124. An N6-carboxylysine modification is found at Lys-124. Position 195 (Cys-195) interacts with [2Fe-2S] cluster. Glu-491 serves as a coordination point for Mg(2+). Ser-517 functions as the Proton acceptor in the catalytic mechanism.

This sequence belongs to the IlvD/Edd family. As to quaternary structure, homodimer. [2Fe-2S] cluster serves as cofactor. It depends on Mg(2+) as a cofactor.

The enzyme catalyses (2R)-2,3-dihydroxy-3-methylbutanoate = 3-methyl-2-oxobutanoate + H2O. The catalysed reaction is (2R,3R)-2,3-dihydroxy-3-methylpentanoate = (S)-3-methyl-2-oxopentanoate + H2O. Its pathway is amino-acid biosynthesis; L-isoleucine biosynthesis; L-isoleucine from 2-oxobutanoate: step 3/4. The protein operates within amino-acid biosynthesis; L-valine biosynthesis; L-valine from pyruvate: step 3/4. Its function is as follows. Functions in the biosynthesis of branched-chain amino acids. Catalyzes the dehydration of (2R,3R)-2,3-dihydroxy-3-methylpentanoate (2,3-dihydroxy-3-methylvalerate) into 2-oxo-3-methylpentanoate (2-oxo-3-methylvalerate) and of (2R)-2,3-dihydroxy-3-methylbutanoate (2,3-dihydroxyisovalerate) into 2-oxo-3-methylbutanoate (2-oxoisovalerate), the penultimate precursor to L-isoleucine and L-valine, respectively. This is Dihydroxy-acid dehydratase from Sinorhizobium medicae (strain WSM419) (Ensifer medicae).